Consider the following 170-residue polypeptide: Glycine cleavage system H protein, mitochondrial (170 aa).

The transit peptide at 1 to 47 (MLRTTRLWTTRMPTVSKLFLRNSSGNALNKNKLPFLYSSQGPQAVRY) directs the protein to the mitochondrion. The Lipoyl-binding domain occupies 61-143 (TAFVGITKYA…MGDGWLVKMK (83 aa)). K102 is modified (N6-lipoyllysine).

It belongs to the GcvH family. Component of the glycine decarboxylase complex (GDC), which is composed of four proteins: P, T, L and H. It depends on (R)-lipoate as a cofactor.

The protein localises to the mitochondrion. The glycine cleavage system (glycine decarboxylase complex) catalyzes the degradation of glycine. The H protein shuttles the methylamine group of glycine from the P protein to the T protein. The chain is Glycine cleavage system H protein, mitochondrial (GCV3) from Saccharomyces cerevisiae (strain ATCC 204508 / S288c) (Baker's yeast).